A 226-amino-acid chain; its full sequence is Phosphoheptose isomerase (226 aa).

In terms of domain architecture, SIS spans 50–212 (IAGVFETGGK…ERMMGYGTEC (163 aa)). 65–67 (NGG) serves as a coordination point for substrate. Zn(2+)-binding residues include H74 and E78. Substrate contacts are provided by residues E78, 109–110 (ND), 135–137 (STS), S140, and Q188. Zn(2+)-binding residues include Q188 and H196.

The protein belongs to the SIS family. GmhA subfamily. Zn(2+) is required as a cofactor.

It localises to the cytoplasm. The catalysed reaction is 2 D-sedoheptulose 7-phosphate = D-glycero-alpha-D-manno-heptose 7-phosphate + D-glycero-beta-D-manno-heptose 7-phosphate. It functions in the pathway carbohydrate biosynthesis; D-glycero-D-manno-heptose 7-phosphate biosynthesis; D-glycero-alpha-D-manno-heptose 7-phosphate and D-glycero-beta-D-manno-heptose 7-phosphate from sedoheptulose 7-phosphate: step 1/1. Its function is as follows. Catalyzes the isomerization of sedoheptulose 7-phosphate in D-glycero-D-manno-heptose 7-phosphate. The polypeptide is Phosphoheptose isomerase (Chlorobium phaeobacteroides (strain DSM 266 / SMG 266 / 2430)).